The chain runs to 83 residues: Mu-theraphotoxin-Hhn2m (83 aa).

Positions 1–21 (MKASMFLALAGLVLLFVVGYA) are cleaved as a signal peptide. A propeptide spanning residues 22–48 (SESEEKEFPIELLSKIFAVDVFKGEER) is cleaved from the precursor. 3 cysteine pairs are disulfide-bonded: Cys-50–Cys-65, Cys-57–Cys-70, and Cys-64–Cys-77. A Leucine amide modification is found at Leu-81.

It belongs to the neurotoxin 10 (Hwtx-1) family. 15 (Hntx-3) subfamily. Monomer. In terms of tissue distribution, expressed by the venom gland.

Its subcellular location is the secreted. In terms of biological role, lethal neurotoxin. Selectively blocks tetrodotoxin-sensitive voltage-gated sodium channels (Nav). Does not affect tetrodotoxin-resistant voltage-gated sodium channels or calcium channels. The protein is Mu-theraphotoxin-Hhn2m of Cyriopagopus hainanus (Chinese bird spider).